The primary structure comprises 573 residues: 2-succinyl-5-enolpyruvyl-6-hydroxy-3-cyclohexene-1-carboxylate synthase (573 aa).

This sequence belongs to the TPP enzyme family. MenD subfamily. In terms of assembly, homodimer. Mg(2+) is required as a cofactor. Requires Mn(2+) as cofactor. Thiamine diphosphate serves as cofactor.

The catalysed reaction is isochorismate + 2-oxoglutarate + H(+) = 5-enolpyruvoyl-6-hydroxy-2-succinyl-cyclohex-3-ene-1-carboxylate + CO2. Its pathway is quinol/quinone metabolism; 1,4-dihydroxy-2-naphthoate biosynthesis; 1,4-dihydroxy-2-naphthoate from chorismate: step 2/7. It functions in the pathway quinol/quinone metabolism; menaquinone biosynthesis. Catalyzes the thiamine diphosphate-dependent decarboxylation of 2-oxoglutarate and the subsequent addition of the resulting succinic semialdehyde-thiamine pyrophosphate anion to isochorismate to yield 2-succinyl-5-enolpyruvyl-6-hydroxy-3-cyclohexene-1-carboxylate (SEPHCHC). The sequence is that of 2-succinyl-5-enolpyruvyl-6-hydroxy-3-cyclohexene-1-carboxylate synthase from Shewanella putrefaciens (strain CN-32 / ATCC BAA-453).